Consider the following 320-residue polypeptide: Delta-aminolevulinic acid dehydratase (320 aa).

The Zn(2+) site is built by C119, C121, and C129. K194 serves as the catalytic Schiff-base intermediate with substrate. 2 residues coordinate 5-aminolevulinate: R204 and R216. E232 is a binding site for Mg(2+). K247 serves as the catalytic Schiff-base intermediate with substrate. S273 lines the 5-aminolevulinate pocket.

This sequence belongs to the ALAD family. As to quaternary structure, homooctamer. Zn(2+) is required as a cofactor.

The catalysed reaction is 2 5-aminolevulinate = porphobilinogen + 2 H2O + H(+). The protein operates within porphyrin-containing compound metabolism; protoporphyrin-IX biosynthesis; coproporphyrinogen-III from 5-aminolevulinate: step 1/4. Catalyzes an early step in the biosynthesis of tetrapyrroles. Binds two molecules of 5-aminolevulinate per subunit, each at a distinct site, and catalyzes their condensation to form porphobilinogen. The polypeptide is Delta-aminolevulinic acid dehydratase (hemB) (Methanothermus sociabilis).